Reading from the N-terminus, the 62-residue chain is MSSTAEEMAAAFEQTGGPDLTTGSGKRTKSDRVEHKHASQPGGDTRKVVQTASNGEAKRKEK.

Residues 1–62 form a disordered region; the sequence is MSSTAEEMAA…SNGEAKRKEK (62 aa). The span at 28 to 37 shows a compositional bias: basic and acidic residues; it reads TKSDRVEHKH.

This is an uncharacterized protein from Caenorhabditis elegans.